The chain runs to 591 residues: Protein CBFA2T3 (591 aa).

Residues 1–105 form a disordered region; the sequence is MPGGTPRLEG…SSSASLSTHQ (105 aa). The mediates localization to the nucleus stretch occupies residues 1-381; sequence MPGGTPRLEG…ADREELNHWI (381 aa). Positions 41-52 are enriched in pro residues; the sequence is STPPNMPPPPPA. Residues 55–105 are compositionally biased toward polar residues; it reads QGATRHPSFTPSTMMNGSSHSPTAINGAPSTPNGFSNGPATSSSASLSTHQ. The TAFH domain maps to 112-207; sequence ARQLSKLKRF…SPAQYLAQHE (96 aa). Disordered stretches follow at residues 226 to 291 and 386 to 420; these read LEVS…PPQH and DAEDMKKGSPPSARPHNSSSSSEAPQLDVHRDFAP. Residues 230-256 are compositionally biased toward basic and acidic residues; the sequence is ESGKRRTPDRTKENGLDRDPLHPEHLS. Polar residues predominate over residues 263–274; it reads SPAQRYSPSNGL. The span at 279 to 290 shows a compositional bias: pro residues; it reads NGLPHPPGPPPQ. The segment covering 394–410 has biased composition (low complexity); sequence SPPSARPHNSSSSSEAP. Residues 433–488 are a coiled coil; that stretch reads RKAEEAVNEVKRQAMSELQKAVSDAERKAHELITTERAKMERALAEAKRQASEDAL. Residues Cys-501, Cys-504, Cys-512, Cys-515, Cys-521, Cys-525, His-533, and Cys-537 each contribute to the Zn(2+) site. The MYND-type zinc finger occupies 501–537; the sequence is CWNCGRKASETCSGCNTARYCGSFCQHKDWEKHHHVC. A disordered region spans residues 548–591; that stretch reads SVPTAVGQPEAVPPMASSPSDAGSAGASRAGTPGTPAPLESASR. Residues 560-585 are compositionally biased toward low complexity; the sequence is PPMASSPSDAGSAGASRAGTPGTPAP.

It belongs to the CBFA2T family.

It localises to the nucleus. The protein resides in the nucleolus. It is found in the nucleoplasm. The protein localises to the golgi apparatus. In terms of biological role, functions as a transcriptional repressor. Regulates the proliferation and the differentiation of erythroid progenitors. Plays a role in granulocyte differentiation. May also function as an A-kinase-anchoring protein. The polypeptide is Protein CBFA2T3 (CBFA2T3) (Gallus gallus (Chicken)).